The primary structure comprises 229 residues: Cytochrome c oxidase subunit 2 (229 aa).

The Mitochondrial intermembrane segment spans residues 1-26; the sequence is MATWSNLGLQDSASPLMEQLNFFHDH. A helical transmembrane segment spans residues 27–48; that stretch reads TLLILIMITILVGYLMLMLFFN. Residues 49–62 lie on the Mitochondrial matrix side of the membrane; the sequence is KFTNRFLLHGQTIE. Residues 63 to 82 traverse the membrane as a helical segment; it reads IIWTILPAIVLMFIALPSLR. The Mitochondrial intermembrane segment spans residues 83-229; the sequence is ILYLLDEINS…IKWITAMNSN (147 aa). Cu cation contacts are provided by His-161, Cys-196, Glu-198, Cys-200, His-204, and Met-207. Glu-198 provides a ligand contact to Mg(2+).

It belongs to the cytochrome c oxidase subunit 2 family. Component of the cytochrome c oxidase (complex IV, CIV), a multisubunit enzyme composed of a catalytic core of 3 subunits and several supernumerary subunits. The complex exists as a monomer or a dimer and forms supercomplexes (SCs) in the inner mitochondrial membrane with ubiquinol-cytochrome c oxidoreductase (cytochrome b-c1 complex, complex III, CIII). The cofactor is Cu cation.

The protein localises to the mitochondrion inner membrane. It carries out the reaction 4 Fe(II)-[cytochrome c] + O2 + 8 H(+)(in) = 4 Fe(III)-[cytochrome c] + 2 H2O + 4 H(+)(out). Functionally, component of the cytochrome c oxidase, the last enzyme in the mitochondrial electron transport chain which drives oxidative phosphorylation. The respiratory chain contains 3 multisubunit complexes succinate dehydrogenase (complex II, CII), ubiquinol-cytochrome c oxidoreductase (cytochrome b-c1 complex, complex III, CIII) and cytochrome c oxidase (complex IV, CIV), that cooperate to transfer electrons derived from NADH and succinate to molecular oxygen, creating an electrochemical gradient over the inner membrane that drives transmembrane transport and the ATP synthase. Cytochrome c oxidase is the component of the respiratory chain that catalyzes the reduction of oxygen to water. Electrons originating from reduced cytochrome c in the intermembrane space (IMS) are transferred via the dinuclear copper A center (CU(A)) of subunit 2 and heme A of subunit 1 to the active site in subunit 1, a binuclear center (BNC) formed by heme A3 and copper B (CU(B)). The BNC reduces molecular oxygen to 2 water molecules using 4 electrons from cytochrome c in the IMS and 4 protons from the mitochondrial matrix. The polypeptide is Cytochrome c oxidase subunit 2 (COII) (Simulium vittatum (Striped black fly)).